The primary structure comprises 718 residues: Neutral ceramidase B (718 aa).

Residues 1 to 20 form the signal peptide; that stretch reads MINSFKKLIILISLVIILLS. N-linked (GlcNAc...) asparagine glycosylation is found at asparagine 224 and asparagine 252. Serine 298 (nucleophile) is an active-site residue. 8 N-linked (GlcNAc...) asparagine glycosylation sites follow: asparagine 358, asparagine 378, asparagine 391, asparagine 421, asparagine 422, asparagine 577, asparagine 610, and asparagine 614.

Belongs to the neutral ceramidase family.

It localises to the secreted. The enzyme catalyses an N-acylsphing-4-enine + H2O = sphing-4-enine + a fatty acid. Hydrolyzes the sphingolipid ceramide into sphingosine and free fatty acid. The polypeptide is Neutral ceramidase B (dcd2B) (Dictyostelium discoideum (Social amoeba)).